The sequence spans 1252 residues: HEAT repeat-containing protein 6 (1252 aa).

Residues 230 to 269 (PDLLGKSGLLMKLSDVTHSDPEVRRAAVHCMANLCLSVPG) form an HEAT 1 repeat. A disordered region spans residues 365–417 (DGRSPVKPQQPESSAARPSANKKKKYKVKPKKTQQGEKAEEEEPYGEVDAAPG). Basic residues predominate over residues 384 to 396 (ANKKKKYKVKPKK). Phosphoserine occurs at positions 471 and 474. HEAT repeat units lie at residues 524-562 (ELGSPQSVSLMTLTLKDPSPKTRACALQVLSAILEGSKQ), 586-624 (SSIRELHRCLLLALVAESSSQTLTQIIKCLANLVSNAPY), and 630-667 (SLLTKVWNHIKPYIRHKDVNVRVSSLTLLGAVVSTHAP). Phosphothreonine is present on Thr689. Ser714 carries the post-translational modification Phosphoserine.

The sequence is that of HEAT repeat-containing protein 6 (Heatr6) from Rattus norvegicus (Rat).